Here is a 359-residue protein sequence, read N- to C-terminus: Heat-inducible transcription repressor HrcA (359 aa).

This sequence belongs to the HrcA family.

In terms of biological role, negative regulator of class I heat shock genes (grpE-dnaK-dnaJ and groELS operons). Prevents heat-shock induction of these operons. The protein is Heat-inducible transcription repressor HrcA of Sinorhizobium medicae (strain WSM419) (Ensifer medicae).